Consider the following 398-residue polypeptide: Cyclic GMP-AMP synthase-like receptor (398 aa).

ATP is bound by residues Ser57 and 69–71; that span reads EFD. Mg(2+) is bound by residues Glu69, Asp71, and Asp192. GTP is bound by residues Asp192 and 240–247; that span reads SLSFQEQE. Residues 244-247, Lys265, and 277-281 each bind ATP; these read QEQE and SYYIK. 3 residues coordinate Mn(2+): Ile288, Glu289, and Asp292.

The protein belongs to the mab-21 family. The cofactor is Mg(2+). Mn(2+) is required as a cofactor.

The enzyme catalyses GTP + ATP = 2',3'-cGAMP + 2 diphosphate. The catalysed reaction is GTP + ATP = pppGp(2'-5')A + diphosphate. It carries out the reaction pppGp(2'-5')A = 2',3'-cGAMP + diphosphate. Its activity is regulated as follows. The enzyme activity is specifically activated by double-stranded RNA (dsRNA). Its function is as follows. Nucleotidyltransferase that catalyzes the formation of cyclic GMP-AMP (2',3'-cGAMP) from ATP and GTP and plays a key role in innate immunity. Acts as a key sensor of double-stranded RNA (dsRNA), the presence of dsRNA in the cytoplasm being a danger signal that triggers the immune responses. Directly binds dsRNA, activating the nucleotidyltransferase activity, leading to synthesis of 2',3'-cGAMP, a second messenger that binds to and activates Sting, thereby triggering the antiviral immune response via activation of the NF-kappa-B transcription factor Rel (Relish). The chain is Cyclic GMP-AMP synthase-like receptor from Tribolium castaneum (Red flour beetle).